Here is a 135-residue protein sequence, read N- to C-terminus: Large ribosomal subunit protein uL16c (135 aa).

This sequence belongs to the universal ribosomal protein uL16 family. In terms of assembly, part of the 50S ribosomal subunit.

It localises to the plastid. Its subcellular location is the chloroplast. The sequence is that of Large ribosomal subunit protein uL16c from Coffea arabica (Arabian coffee).